The primary structure comprises 557 residues: Dihydroxy-acid dehydratase (557 aa).

D78 contacts Mg(2+). C119 contacts [2Fe-2S] cluster. Mg(2+) is bound by residues D120 and K121. K121 is modified (N6-carboxylysine). C192 contacts [2Fe-2S] cluster. E446 contributes to the Mg(2+) binding site. Residue S472 is the Proton acceptor of the active site.

Belongs to the IlvD/Edd family. As to quaternary structure, homodimer. It depends on [2Fe-2S] cluster as a cofactor. Requires Mg(2+) as cofactor.

The enzyme catalyses (2R)-2,3-dihydroxy-3-methylbutanoate = 3-methyl-2-oxobutanoate + H2O. It catalyses the reaction (2R,3R)-2,3-dihydroxy-3-methylpentanoate = (S)-3-methyl-2-oxopentanoate + H2O. It functions in the pathway amino-acid biosynthesis; L-isoleucine biosynthesis; L-isoleucine from 2-oxobutanoate: step 3/4. It participates in amino-acid biosynthesis; L-valine biosynthesis; L-valine from pyruvate: step 3/4. Functions in the biosynthesis of branched-chain amino acids. Catalyzes the dehydration of (2R,3R)-2,3-dihydroxy-3-methylpentanoate (2,3-dihydroxy-3-methylvalerate) into 2-oxo-3-methylpentanoate (2-oxo-3-methylvalerate) and of (2R)-2,3-dihydroxy-3-methylbutanoate (2,3-dihydroxyisovalerate) into 2-oxo-3-methylbutanoate (2-oxoisovalerate), the penultimate precursor to L-isoleucine and L-valine, respectively. This is Dihydroxy-acid dehydratase from Campylobacter fetus subsp. fetus (strain 82-40).